The sequence spans 1235 residues: JNK-interacting protein 3 (1235 aa).

The segment at 1–22 (MMDNDDALLNNGGPQSGAETVY) is disordered. Residues 25–113 (EDNNMVMSEK…VTQYEREKSA (89 aa)) enclose the RH1 domain. Residues 84–184 (RINQEQDVEL…NKLHERYTEL (101 aa)) adopt a coiled-coil conformation. The segment at 278-325 (GAATDSLQQQHQATSPQSPPDTSPVVPNVPPANVGRSTTKKEQRSDNN) is disordered. Residues 282–293 (DSLQQQHQATSP) show a composition bias toward polar residues. The segment covering 294–307 (QSPPDTSPVVPNVP) has biased composition (pro residues). A coiled-coil region spans residues 366–493 (GKEVENLIME…AVRLTEILRA (128 aa)). Residues 456–526 (RKRFTRVEMA…TPSNRPTERI (71 aa)) enclose the RH2 domain. Disordered regions lie at residues 520-572 (NRPT…MHPA), 813-852 (KPKSEDEQNSNSKPQQQQQDEEEAKEATEKSNEPLPPVNA), and 869-897 (PGAPQRLSSGNSGSDGNQANNNNSSSTGS). The span at 529 to 543 (GLGGGPMFRNTGGGS) shows a compositional bias: gly residues. 2 stretches are compositionally biased toward low complexity: residues 544–555 (PAHSHGSPSRGS) and 821–830 (NSNSKPQQQQ). Residues 874 to 897 (RLSSGNSGSDGNQANNNNSSSTGS) show a composition bias toward polar residues.

It belongs to the JIP scaffold family. As to quaternary structure, forms homo- and heterooligomeric complexes. Binds the TPR motif-containing C-terminal of kinesin light chain, Klc. Pre-assembled syd scaffolding complexes are then transported as a cargo of kinesin, to the required subcellular location.

Its subcellular location is the cytoplasm. Its function is as follows. The JNK-interacting protein (JIP) group of scaffold proteins selectively mediates JNK-signaling by aggregating specific components of the MAPK cascade to form a functional JNK signaling module. May function as a regulator of vesicle transport, through interactions with the JNK-signaling components and motor proteins. Syd is required for efficient kinesin-I mediated axonal transport. The chain is JNK-interacting protein 3 from Drosophila pseudoobscura pseudoobscura (Fruit fly).